The primary structure comprises 105 residues: Small ribosomal subunit protein uS10 (105 aa).

The protein belongs to the universal ribosomal protein uS10 family. In terms of assembly, part of the 30S ribosomal subunit.

In terms of biological role, involved in the binding of tRNA to the ribosomes. In Phytoplasma australiense, this protein is Small ribosomal subunit protein uS10.